Here is a 185-residue protein sequence, read N- to C-terminus: Cbp/p300-interacting transactivator 4 (185 aa).

Disordered regions lie at residues 15–64 and 95–130; these read PRPP…VAYG and YPGR…AHAL. A compositionally biased stretch (pro residues) spans 103–125; the sequence is PGAPGGPSGPQPAPGAPAPPLQP.

Belongs to the CITED family. As to quaternary structure, interacts via its C-terminal region with the CH1 domain of CREBBP and EP300. Interacts with all TFAP2/AP-2 isoforms.

The protein resides in the nucleus. It localises to the cytoplasm. Acts as a transcriptional coactivator for TFAP2/AP-2. Enhances estrogen-dependent transactivation mediated by estrogen receptors. May function as an inhibitor of transactivation by HIF1A by disrupting HIF1A interaction with CREBBP. May be involved in regulation of gene expression during development and differentiation of blood cells, endothelial cells and mammary epithelial cells. The polypeptide is Cbp/p300-interacting transactivator 4 (CITED4) (Bos taurus (Bovine)).